The sequence spans 123 residues: Protein Wnt-7a (123 aa).

Ser1 carries O-palmitoleoyl serine; by PORCN lipidation. Positions 33 to 61 (VEPVRASRNKRPTFLKIKKPLSYRKPMDT) are disordered linker. Cysteines 89 and 104 form a disulfide. An N-linked (GlcNAc...) asparagine glycan is attached at Asn90.

It belongs to the Wnt family. Forms a soluble 1:1 complex with AFM; this prevents oligomerization and is required for prolonged biological activity. The complex with AFM may represent the physiological form in body fluids. Interacts with FZD5. Interacts with PORCN. Post-translationally, palmitoleoylation is required for efficient binding to frizzled receptors. Depalmitoleoylation leads to Wnt signaling pathway inhibition.

It is found in the secreted. The protein localises to the extracellular space. Its subcellular location is the extracellular matrix. Functionally, ligand for members of the frizzled family of seven transmembrane receptors that functions in the canonical Wnt/beta-catenin signaling pathway. Plays an important role in embryonic development, including dorsal versus ventral patterning during limb development, skeleton development and urogenital tract development. Required for central nervous system (CNS) angiogenesis and blood-brain barrier regulation. The polypeptide is Protein Wnt-7a (WNT7A) (Meleagris gallopavo (Wild turkey)).